Reading from the N-terminus, the 499-residue chain is Importin subunit alpha-8 (499 aa).

Positions 1–57 (MATSKAPKERLKNYKYRGKEMSLPRQQRIASSLQLRKTRKDEQVLKRRNIDLFSSDM) constitute an IBB domain. ARM repeat units lie at residues 101–141 (TPPL…NIAS), 144–183 (SEQTRAVVKEGAIQPLIELLCSPHLTVSEQAVWALGNIAG), 186–226 (AEFR…NLCR), 229–268 (DPYPSESAVRQMLPPLCQLLLHRDNEILADTCWALSYLTK), 271–310 (KEYIHHVVTTGILPRLVELMTSSELSISIPCLHTIGNIVA), 313–352 (DEQTQMAIDAGMLKVLGQVLKHPKTSIQVLAAWTMSNVAA), 354–393 (PRHQVEQLLCNLLPILVDLLRNAELKVQKEVVCTVINIAT), and 397–436 (QDQLTLLAHSGILEPMLSLLSAPDLEVVIIVLDIISYLLQ).

This sequence belongs to the importin alpha family. In terms of assembly, binds to importin subunit beta-1/KPNB1 via the IBB domain; this complex dissociates in the presence of RAN-GTP. Shows a limited binding to the RB1 nuclear localization signal (NLS), but not to the SV40, nor NPM1 NLSs. Interacts with RSL1D1. In terms of tissue distribution, expressed predominantly in ovary. Isoform 1 is the predominant form.

The protein resides in the nucleus. Its function is as follows. Functions in nuclear protein import. The sequence is that of Importin subunit alpha-8 (Kpna7) from Mus musculus (Mouse).